Reading from the N-terminus, the 438-residue chain is Ammonium transporter Rh type A (438 aa).

At 1 to 4 (MRFK) the chain is on the cytoplasmic side. Residues 5–25 (FPLMAISLEVAMIVLFGLFVE) traverse the membrane as a helical segment. The Extracellular portion of the chain corresponds to 26-61 (YETPQNASQKNASHQNASQQGNTSSSAKKDQFFQLY). N-linked (GlcNAc...) asparagine glycosylation is found at Asn-31, Asn-36, Asn-41, and Asn-47. Residues 62 to 82 (PLFQDVHVMIFVGFGFLMTFL) form a helical membrane-spanning segment. Residues 83 to 86 (KKYG) are Cytoplasmic-facing. A helical membrane pass occupies residues 87–107 (FSGVGFNLFLAALGLQWGTIM). Residues 108-121 (QGLLHSHGKEFHFG) lie on the Extracellular side of the membrane. The chain crosses the membrane as a helical span at residues 122–142 (IYNMINADFSTATVLISFGAV). Over 143–148 (LGKTSP) the chain is Cytoplasmic. The chain crosses the membrane as a helical span at residues 149 to 169 (IQMLIMTILEIAVFAGNEYLV). Topologically, residues 170 to 178 (TELFEASDT) are extracellular. Residues 179 to 199 (GASMTIHAFGAYFGLAVAGVL) form a helical membrane-spanning segment. The Cytoplasmic portion of the chain corresponds to 200-218 (YRPGLRCEHPNDESVYHSD). A helical transmembrane segment spans residues 219–239 (LFAMIGTLFLWIFWPSFNSAI). Topologically, residues 240–249 (ADPGDHQYRA) are extracellular. Residues 250 to 270 (IVNTYMSLAACVITAYALSSL) traverse the membrane as a helical segment. Residues 271 to 278 (VERRGRLD) are Cytoplasmic-facing. Residues 279 to 296 (MVHIQNATLAGGVAVGTC) form a helical membrane-spanning segment. The Extracellular segment spans residues 297-300 (ADME). The chain crosses the membrane as a helical span at residues 301–321 (IPLYAAMTIGSIAGIISVLGY). At 322-342 (KFFSPLLANKLMIHDTCGVHN) the chain is on the cytoplasmic side. The helical transmembrane segment at 343 to 363 (LHGLPGVFGGLASIVAISWGM) threads the bilayer. Residues 364–372 (STASMAMQA) are Extracellular-facing. The helical transmembrane segment at 373-393 (AALGSSIGSAIVGGLLTGLIL) threads the bilayer. Residues 394-438 (KLPIWNQPPDEYCYDDSVSWKVPKFRELDNRFFQHANHNHVEHEV) lie on the Cytoplasmic side of the membrane.

This sequence belongs to the ammonium transporter (TC 2.A.49) family. Rh subfamily. In terms of assembly, homodimer. Heterotrimer; a RHCE monomer interacts with a RHAG homodimer. Component of the ankyrin-1 complex in the erythrocyte, composed of ANK1, RHCE, RHAG, SLC4A1, EPB42, GYPA, GYPB and AQP1. Interacts with GYPB (via the N-terminal); this interaction bridges the (RHAG)2(RHCE) heterotrimer with the SLC4A1 Band 3 I dimer complexed with GYPA. Glycosylated.

It is found in the membrane. The enzyme catalyses methylamine(out) = methylamine(in). It carries out the reaction NH4(+)(in) = NH4(+)(out). The catalysed reaction is CO2(out) = CO2(in). Component of the ankyrin-1 complex, a multiprotein complex involved in the stability and shape of the erythrocyte membrane. Heterotrimer with RHCE (RHAG)2(RHCE), that transports ammonium and its related derivative methylammonium, in both neutral and ionic forms, across the erythrocyte membrane. The transport of NH4(+) is electrogenic and masks the NH3 transport. Also, may act as a CO2 channel. Moreover in erythrocyte, regulates RHD membrane expression and is associated with rhesus blood group antigen expression. The polypeptide is Ammonium transporter Rh type A (Mus musculus (Mouse)).